A 492-amino-acid polypeptide reads, in one-letter code: Cytochrome P450 monooxygenase rdc4 (492 aa).

A heme-binding site is contributed by Cys435.

It belongs to the cytochrome P450 family. Heme is required as a cofactor.

The protein operates within secondary metabolite biosynthesis. Its function is as follows. Cytochrome P450 monooxygenase; part of the gene cluster that mediates the biosynthesis of radicicol, a resorcylic acid lactone (RAL) that irreversibly inhibits the HSP90 molecular chaperone, an important target for cancer chemotherapy. The radicicol cluster encodes only two apparent post-PKS enzymes, a cytochrome P450 monooxygenase (rdc4) and a non-heme halogenase (rdc2) that could introduce the epoxide and the chlorine, respectively. If this cluster includes all the genes required for radicicol biosynthesis, the remaining structural features of radicicol are presumably generated by the PKSs rdc1 and rdc5. The C-2' ketone could arise if the R-PKS rdc5 and NR-PKS rdc1 each carry out four iterations, in contrast to the five iteration-three iteration split for the hypothemycin PKSs. The origin of the cis 5',6' double bond is not known. The radicicol R-PKS rdc5 ER domain may catalyze either double bond isomerization or reduction in the third iteration. This chain is Cytochrome P450 monooxygenase rdc4, found in Metacordyceps chlamydosporia (Nematophagous fungus).